The sequence spans 615 residues: DNA mismatch repair protein MutL (615 aa).

The segment at 363-397 (FAEPAAREPVAPRYTPAPASGSRPAAPWPNAQPGY) is disordered. The span at 364–391 (AEPAAREPVAPRYTPAPASGSRPAAPWP) shows a compositional bias: low complexity.

It belongs to the DNA mismatch repair MutL/HexB family.

Its function is as follows. This protein is involved in the repair of mismatches in DNA. It is required for dam-dependent methyl-directed DNA mismatch repair. May act as a 'molecular matchmaker', a protein that promotes the formation of a stable complex between two or more DNA-binding proteins in an ATP-dependent manner without itself being part of a final effector complex. In Escherichia coli O9:H4 (strain HS), this protein is DNA mismatch repair protein MutL.